A 417-amino-acid polypeptide reads, in one-letter code: Hydroxysteroid dehydrogenase-like protein 2 (417 aa).

NADP(+) is bound by residues 17 to 23 (GASRGIG), Lys42, and Asp74. The Proton acceptor role is filled by Tyr168. Lys172 lines the NADP(+) pocket. In terms of domain architecture, SCP2 spans 306–414 (SSPLQETFKA…KLEKILGQMN (109 aa)).

This sequence belongs to the short-chain dehydrogenases/reductases (SDR) family.

Its subcellular location is the peroxisome. The protein resides in the mitochondrion. Its function is as follows. Has apparently no steroid dehydrogenase activity. Might act as a metabolic regulator that affects systemic adaptation to nutritional cues. This is Hydroxysteroid dehydrogenase-like protein 2 (hsdl2) from Xenopus tropicalis (Western clawed frog).